Consider the following 117-residue polypeptide: Large ribosomal subunit protein bL20c (117 aa).

Belongs to the bacterial ribosomal protein bL20 family.

The protein localises to the plastid. It localises to the chloroplast. Its function is as follows. Binds directly to 23S ribosomal RNA and is necessary for the in vitro assembly process of the 50S ribosomal subunit. It is not involved in the protein synthesizing functions of that subunit. The sequence is that of Large ribosomal subunit protein bL20c from Phalaenopsis aphrodite subsp. formosana (Moth orchid).